The primary structure comprises 508 residues: Maturase K (508 aa).

It belongs to the intron maturase 2 family. MatK subfamily.

It is found in the plastid. It localises to the chloroplast. Its function is as follows. Usually encoded in the trnK tRNA gene intron. Probably assists in splicing its own and other chloroplast group II introns. This Lupinus cosentinii (West Australian blue lupine) protein is Maturase K.